A 51-amino-acid polypeptide reads, in one-letter code: Lipid-anchored plasma membrane protein CPP3 (51 aa).

The interval 1-28 is disordered; sequence MRHHQNMHYAPQQQPVYVQQPPPRRESG.

This sequence belongs to the CYSTM1 family. Palmitoylated near the C-terminus.

The protein localises to the cell membrane. This is Lipid-anchored plasma membrane protein CPP3 from Saccharomyces cerevisiae (strain ATCC 204508 / S288c) (Baker's yeast).